The chain runs to 246 residues: DNA polymerase sliding clamp (246 aa).

This sequence belongs to the PCNA family. Homotrimer. The subunits circularize to form a toroid; DNA passes through its center. Replication factor C (RFC) is required to load the toroid on the DNA.

In terms of biological role, sliding clamp subunit that acts as a moving platform for DNA processing. Responsible for tethering the catalytic subunit of DNA polymerase and other proteins to DNA during high-speed replication. This chain is DNA polymerase sliding clamp, found in Methanocella arvoryzae (strain DSM 22066 / NBRC 105507 / MRE50).